Reading from the N-terminus, the 344-residue chain is Dihydroorotate dehydrogenase (quinone) (344 aa).

Residues 65-69 (AGFDK) and T89 each bind FMN. K69 contributes to the substrate binding site. Residue 114–118 (NRMGF) participates in substrate binding. FMN-binding residues include N145 and N178. Substrate is bound at residue N178. S181 (nucleophile) is an active-site residue. Position 183 (N183) interacts with substrate. Residues K215 and T243 each contribute to the FMN site. Position 244-245 (244-245 (NT)) interacts with substrate. FMN-binding positions include G269, G298, and 319–320 (YT).

This sequence belongs to the dihydroorotate dehydrogenase family. Type 2 subfamily. In terms of assembly, monomer. Requires FMN as cofactor.

Its subcellular location is the cell membrane. The catalysed reaction is (S)-dihydroorotate + a quinone = orotate + a quinol. It functions in the pathway pyrimidine metabolism; UMP biosynthesis via de novo pathway; orotate from (S)-dihydroorotate (quinone route): step 1/1. Its function is as follows. Catalyzes the conversion of dihydroorotate to orotate with quinone as electron acceptor. The polypeptide is Dihydroorotate dehydrogenase (quinone) (Clavibacter michiganensis subsp. michiganensis (strain NCPPB 382)).